The primary structure comprises 138 residues: Ribosome-binding factor A (138 aa).

The interval 117–138 (ERQNKPAASTEKPPVGSLDADL) is disordered.

The protein belongs to the RbfA family. In terms of assembly, monomer. Binds 30S ribosomal subunits, but not 50S ribosomal subunits or 70S ribosomes.

It localises to the cytoplasm. One of several proteins that assist in the late maturation steps of the functional core of the 30S ribosomal subunit. Associates with free 30S ribosomal subunits (but not with 30S subunits that are part of 70S ribosomes or polysomes). Required for efficient processing of 16S rRNA. May interact with the 5'-terminal helix region of 16S rRNA. This chain is Ribosome-binding factor A, found in Acaryochloris marina (strain MBIC 11017).